The following is a 253-amino-acid chain: FSQPFSRPSSRVVNGEDAVPYSWSWQVSLQYEKDGAFHHTCGGSLIAPDWVVTAGHCISTSRTYQVVLGEYDRSVLEGSEQVIPINAGDLFVHPLWNSNCVACGNDIALVKLSRSAQLGDKVQLANLPPAGDILPNEAPCYISGWGRLYTGGPLPDKLQQALLPVVDYEHCSQWDWWGITVKKTMVCAGGDTRSGCNGDSGGPLNCPAADGSWQVHGVTSFVSAFGCNTIKKPTVFTRVSAFIDWIDETIASN.

A propeptide spans 1-11 (activation peptide); that stretch reads FSQPFSRPSSR. Positions 12–251 constitute a Peptidase S1 domain; the sequence is VVNGEDAVPY…FIDWIDETIA (240 aa). Cystine bridges form between Cys-41-Cys-57, Cys-100-Cys-103, Cys-140-Cys-206, Cys-171-Cys-187, and Cys-196-Cys-227.

Belongs to the peptidase S1 family. As to quaternary structure, monomer. The zymogen is secreted as a ternary complex composed of procarboxypeptidase A, chymotrypsinogen C and proproteinase E. Pancreas.

It localises to the secreted. The protein localises to the extracellular space. Its function is as follows. May protect procarboxypeptidase A against denaturation in the acidic environment of the ruminant duodenum. The polypeptide is Proproteinase E (Bos taurus (Bovine)).